The chain runs to 428 residues: 3-phosphoshikimate 1-carboxyvinyltransferase (428 aa).

3 residues coordinate 3-phosphoshikimate: Lys21, Ser22, and Arg26. A phosphoenolpyruvate-binding site is contributed by Lys21. Phosphoenolpyruvate contacts are provided by Gly94 and Arg122. 6 residues coordinate 3-phosphoshikimate: Ser166, Ser167, Gln168, Ser194, Asp306, and Lys333. Phosphoenolpyruvate is bound at residue Gln168. Asp306 serves as the catalytic Proton acceptor. The phosphoenolpyruvate site is built by Arg337, Arg379, and Lys405.

Belongs to the EPSP synthase family. Monomer.

It localises to the cytoplasm. The enzyme catalyses 3-phosphoshikimate + phosphoenolpyruvate = 5-O-(1-carboxyvinyl)-3-phosphoshikimate + phosphate. It participates in metabolic intermediate biosynthesis; chorismate biosynthesis; chorismate from D-erythrose 4-phosphate and phosphoenolpyruvate: step 6/7. Its function is as follows. Catalyzes the transfer of the enolpyruvyl moiety of phosphoenolpyruvate (PEP) to the 5-hydroxyl of shikimate-3-phosphate (S3P) to produce enolpyruvyl shikimate-3-phosphate and inorganic phosphate. The protein is 3-phosphoshikimate 1-carboxyvinyltransferase of Clostridium acetobutylicum (strain ATCC 824 / DSM 792 / JCM 1419 / IAM 19013 / LMG 5710 / NBRC 13948 / NRRL B-527 / VKM B-1787 / 2291 / W).